A 182-amino-acid chain; its full sequence is Ribosome-recycling factor (182 aa).

Belongs to the RRF family.

Its subcellular location is the cytoplasm. Its function is as follows. Responsible for the release of ribosomes from messenger RNA at the termination of protein biosynthesis. May increase the efficiency of translation by recycling ribosomes from one round of translation to another. This Prochlorococcus marinus (strain AS9601) protein is Ribosome-recycling factor.